A 296-amino-acid polypeptide reads, in one-letter code: Ribosomal RNA small subunit methyltransferase A (296 aa).

Residues N30, L32, G57, E78, D103, and N128 each contribute to the S-adenosyl-L-methionine site.

This sequence belongs to the class I-like SAM-binding methyltransferase superfamily. rRNA adenine N(6)-methyltransferase family. RsmA subfamily.

It localises to the cytoplasm. The catalysed reaction is adenosine(1518)/adenosine(1519) in 16S rRNA + 4 S-adenosyl-L-methionine = N(6)-dimethyladenosine(1518)/N(6)-dimethyladenosine(1519) in 16S rRNA + 4 S-adenosyl-L-homocysteine + 4 H(+). Specifically dimethylates two adjacent adenosines (A1518 and A1519) in the loop of a conserved hairpin near the 3'-end of 16S rRNA in the 30S particle. May play a critical role in biogenesis of 30S subunits. This chain is Ribosomal RNA small subunit methyltransferase A, found in Staphylococcus haemolyticus (strain JCSC1435).